We begin with the raw amino-acid sequence, 81 residues long: U6-theraphotoxin-Hs1a (81 aa).

The first 21 residues, 1–21 (MKASMFLALAGLVLLFVVCYA), serve as a signal peptide directing secretion. The propeptide occupies 22 to 48 (SESEEKEFPRELLSTIFAVDDFKGEER). 2 disulfide bridges follow: C50–C65 and C57–C70.

Belongs to the neurotoxin 10 (Hwtx-1) family. 51 (Hntx-8) subfamily. In terms of tissue distribution, expressed by the venom gland.

The protein localises to the secreted. Binds to the nicotinic acetylcholine receptor. Blocks neuromuscular transmission. This is U6-theraphotoxin-Hs1a from Cyriopagopus schmidti (Chinese bird spider).